A 321-amino-acid polypeptide reads, in one-letter code: Glucokinase (321 aa).

Residue 8-13 coordinates ATP; that stretch reads GDVGGT.

This sequence belongs to the bacterial glucokinase family.

It localises to the cytoplasm. It catalyses the reaction D-glucose + ATP = D-glucose 6-phosphate + ADP + H(+). The sequence is that of Glucokinase from Salmonella choleraesuis (strain SC-B67).